Reading from the N-terminus, the 213-residue chain is Glycerol-3-phosphate acyltransferase (213 aa).

5 helical membrane passes run 3 to 23, 51 to 71, 78 to 98, 115 to 135, and 140 to 160; these read ILLAALVAYLIGSVSFAVVVS, KAAILTLVGDAFKGWIAVWLA, DVAVAWVAIAVFLGHLYPVFF, AVHPVLGLATALTWLIVAFFF, and LAALVAAVFAPVFDVFLFGTP.

It belongs to the PlsY family. In terms of assembly, probably interacts with PlsX.

Its subcellular location is the cell inner membrane. It catalyses the reaction an acyl phosphate + sn-glycerol 3-phosphate = a 1-acyl-sn-glycero-3-phosphate + phosphate. It functions in the pathway lipid metabolism; phospholipid metabolism. Catalyzes the transfer of an acyl group from acyl-phosphate (acyl-PO(4)) to glycerol-3-phosphate (G3P) to form lysophosphatidic acid (LPA). This enzyme utilizes acyl-phosphate as fatty acyl donor, but not acyl-CoA or acyl-ACP. The chain is Glycerol-3-phosphate acyltransferase from Burkholderia cenocepacia (strain ATCC BAA-245 / DSM 16553 / LMG 16656 / NCTC 13227 / J2315 / CF5610) (Burkholderia cepacia (strain J2315)).